The primary structure comprises 353 residues: Photosystem II protein D1 (353 aa).

At T2 the chain carries N-acetylthreonine. T2 is subject to Phosphothreonine. The next 3 helical transmembrane spans lie at 29–46 (YIGWFGVLMIPTLLTATS), 118–133 (HFLLGVACYMGREWEL), and 142–156 (WIAVAYSAPVAAAAA). H118 provides a ligand contact to chlorophyll a. Y126 serves as a coordination point for pheophytin a. Residues D170 and E189 each coordinate [CaMn4O5] cluster. The helical transmembrane segment at 197-218 (FHMLGVAGVFGGSLFSAMHGSL) threads the bilayer. Residue H198 participates in chlorophyll a binding. A quinone is bound by residues H215 and 264–265 (SF). H215 contacts Fe cation. Residue H272 participates in Fe cation binding. A helical transmembrane segment spans residues 274-288 (FLAAWPVVGIWFTAL). H332, E333, D342, and A344 together coordinate [CaMn4O5] cluster. Positions 345 to 353 (SVEAPSVKA) are excised as a propeptide.

The protein belongs to the reaction center PufL/M/PsbA/D family. As to quaternary structure, PSII is composed of 1 copy each of membrane proteins PsbA, PsbB, PsbC, PsbD, PsbE, PsbF, PsbH, PsbI, PsbJ, PsbK, PsbL, PsbM, PsbT, PsbX, PsbY, PsbZ, Psb30/Ycf12, at least 3 peripheral proteins of the oxygen-evolving complex and a large number of cofactors. It forms dimeric complexes. The cofactor is The D1/D2 heterodimer binds P680, chlorophylls that are the primary electron donor of PSII, and subsequent electron acceptors. It shares a non-heme iron and each subunit binds pheophytin, quinone, additional chlorophylls, carotenoids and lipids. D1 provides most of the ligands for the Mn4-Ca-O5 cluster of the oxygen-evolving complex (OEC). There is also a Cl(-1) ion associated with D1 and D2, which is required for oxygen evolution. The PSII complex binds additional chlorophylls, carotenoids and specific lipids.. Tyr-161 forms a radical intermediate that is referred to as redox-active TyrZ, YZ or Y-Z. Post-translationally, C-terminally processed by CTPA; processing is essential to allow assembly of the oxygen-evolving complex and thus photosynthetic growth.

The protein resides in the plastid. Its subcellular location is the chloroplast thylakoid membrane. The catalysed reaction is 2 a plastoquinone + 4 hnu + 2 H2O = 2 a plastoquinol + O2. Its function is as follows. Photosystem II (PSII) is a light-driven water:plastoquinone oxidoreductase that uses light energy to abstract electrons from H(2)O, generating O(2) and a proton gradient subsequently used for ATP formation. It consists of a core antenna complex that captures photons, and an electron transfer chain that converts photonic excitation into a charge separation. The D1/D2 (PsbA/PsbD) reaction center heterodimer binds P680, the primary electron donor of PSII as well as several subsequent electron acceptors. This Angiopteris evecta (Mule's foot fern) protein is Photosystem II protein D1.